A 469-amino-acid polypeptide reads, in one-letter code: Probable monogalactosyldiacylglycerol synthase 2, chloroplastic (469 aa).

A chloroplast-targeting transit peptide spans M1–G42.

The protein belongs to the glycosyltransferase 28 family.

It localises to the plastid. It is found in the chloroplast membrane. The enzyme catalyses a 1,2-diacyl-sn-glycerol + UDP-alpha-D-galactose = a 1,2-diacyl-3-O-(beta-D-galactosyl)-sn-glycerol + UDP + H(+). Its function is as follows. Involved in the synthesis of the major structural component of photosynthetic membranes. In Oryza sativa subsp. indica (Rice), this protein is Probable monogalactosyldiacylglycerol synthase 2, chloroplastic (MGD2).